Consider the following 365-residue polypeptide: Aminomethyltransferase (365 aa).

It belongs to the GcvT family. In terms of assembly, the glycine cleavage system is composed of four proteins: P, T, L and H.

It catalyses the reaction N(6)-[(R)-S(8)-aminomethyldihydrolipoyl]-L-lysyl-[protein] + (6S)-5,6,7,8-tetrahydrofolate = N(6)-[(R)-dihydrolipoyl]-L-lysyl-[protein] + (6R)-5,10-methylene-5,6,7,8-tetrahydrofolate + NH4(+). Functionally, the glycine cleavage system catalyzes the degradation of glycine. The sequence is that of Aminomethyltransferase from Erwinia tasmaniensis (strain DSM 17950 / CFBP 7177 / CIP 109463 / NCPPB 4357 / Et1/99).